Here is a 360-residue protein sequence, read N- to C-terminus: RNA demethylase ALKBH5 (360 aa).

The interval 1–53 (MSATYTDLREKLQSLNRDSPKEVRKRKQPASDTEEEDEAGSEPEAEEEEARKV) is disordered. Residues 7–22 (DLREKLQSLNRDSPKE) show a composition bias toward basic and acidic residues. The span at 32–48 (DTEEEDEAGSEPEAEEE) shows a compositional bias: acidic residues. Y107 is an active-site residue. The 2-oxoglutarate site is built by N161, Y163, H172, H234, and R245. A disulfide bridge links C198 with C235. Residues 261–360 (EMKSLSSSYQ…PVRKVKMRRH (100 aa)) are disordered. Residues 264–280 (SLSSSYQPERLQGSNRQ) are compositionally biased toward polar residues. Positions 281–290 (HILKPKRSHR) are enriched in basic residues. 2 stretches are compositionally biased toward basic and acidic residues: residues 291–312 (KADPDAAHRPRILEMDKEENRR) and 330–340 (YWRRSHDHVDT).

Belongs to the alkB family. Monomer. The cofactor is Fe(2+).

It localises to the nucleus speckle. It carries out the reaction an N(6)-methyladenosine in mRNA + 2-oxoglutarate + O2 = an adenosine in mRNA + formaldehyde + succinate + CO2. Its function is as follows. Dioxygenase that specifically demethylates N(6)-methyladenosine (m6A) RNA, the most prevalent internal modification of messenger RNA (mRNA) in higher eukaryotes. Demethylates RNA by oxidative demethylation, which requires molecular oxygen, alpha-ketoglutarate and iron. Demethylation of m6A mRNA affects mRNA processing, translation and export. The protein is RNA demethylase ALKBH5 (alkbh5) of Xenopus laevis (African clawed frog).